A 488-amino-acid polypeptide reads, in one-letter code: Protein nucleotidyltransferase YdiU (488 aa).

ATP contacts are provided by Gly91, Gly93, Arg94, Lys114, Asp126, Gly127, Arg177, and Arg184. The active-site Proton acceptor is Asp253. Mg(2+)-binding residues include Asn254 and Asp263. Residue Asp263 coordinates ATP.

It belongs to the SELO family. It depends on Mg(2+) as a cofactor. Requires Mn(2+) as cofactor.

It catalyses the reaction L-seryl-[protein] + ATP = 3-O-(5'-adenylyl)-L-seryl-[protein] + diphosphate. The enzyme catalyses L-threonyl-[protein] + ATP = 3-O-(5'-adenylyl)-L-threonyl-[protein] + diphosphate. The catalysed reaction is L-tyrosyl-[protein] + ATP = O-(5'-adenylyl)-L-tyrosyl-[protein] + diphosphate. It carries out the reaction L-histidyl-[protein] + UTP = N(tele)-(5'-uridylyl)-L-histidyl-[protein] + diphosphate. It catalyses the reaction L-seryl-[protein] + UTP = O-(5'-uridylyl)-L-seryl-[protein] + diphosphate. The enzyme catalyses L-tyrosyl-[protein] + UTP = O-(5'-uridylyl)-L-tyrosyl-[protein] + diphosphate. In terms of biological role, nucleotidyltransferase involved in the post-translational modification of proteins. It can catalyze the addition of adenosine monophosphate (AMP) or uridine monophosphate (UMP) to a protein, resulting in modifications known as AMPylation and UMPylation. This chain is Protein nucleotidyltransferase YdiU, found in Bacillus thuringiensis (strain Al Hakam).